Consider the following 113-residue polypeptide: Protein Asterix (113 aa).

The helical transmembrane segment at 81–97 (IVSSFMLSVSAVVMSYL) threads the bilayer.

It belongs to the Asterix family.

It is found in the membrane. This Caenorhabditis elegans protein is Protein Asterix.